The primary structure comprises 242 residues: Sugar fermentation stimulation protein homolog (242 aa).

It belongs to the SfsA family.

This chain is Sugar fermentation stimulation protein homolog, found in Nitratidesulfovibrio vulgaris (strain DP4) (Desulfovibrio vulgaris).